Here is a 163-residue protein sequence, read N- to C-terminus: ATP synthase subunit b', chloroplastic (163 aa).

Residues 26 to 46 (ATLPLMALQFILLTVILTFVF) form a helical membrane-spanning segment.

It belongs to the ATPase B chain family. In terms of assembly, F-type ATPases have 2 components, F(1) - the catalytic core - and F(0) - the membrane proton channel. F(1) has five subunits: alpha(3), beta(3), gamma(1), delta(1), epsilon(1). F(0) has four main subunits: a(1), b(1), b'(1) and c(10-14). The alpha and beta chains form an alternating ring which encloses part of the gamma chain. F(1) is attached to F(0) by a central stalk formed by the gamma and epsilon chains, while a peripheral stalk is formed by the delta, b and b' chains.

Its subcellular location is the plastid. The protein localises to the chloroplast thylakoid membrane. Functionally, f(1)F(0) ATP synthase produces ATP from ADP in the presence of a proton or sodium gradient. F-type ATPases consist of two structural domains, F(1) containing the extramembraneous catalytic core and F(0) containing the membrane proton channel, linked together by a central stalk and a peripheral stalk. During catalysis, ATP synthesis in the catalytic domain of F(1) is coupled via a rotary mechanism of the central stalk subunits to proton translocation. Component of the F(0) channel, it forms part of the peripheral stalk, linking F(1) to F(0). The b'-subunit is a diverged and duplicated form of b found in plants and photosynthetic bacteria. The protein is ATP synthase subunit b', chloroplastic of Ochrosphaera neapolitana.